A 195-amino-acid polypeptide reads, in one-letter code: MYRIVLGKVSTLSAAPLPPGLREQAPQGPRRERWLAGRALLSHTLSPLPEIIYGEQGKPAFAPETPLWFNLSHSGDDIALLLSDEGEVGCDIEVIRPRANWRWLANAVFSLGEHAEMDAVHPDQQLEMFWRIWTRKEAIVKQRGGSAWQIVSVDSTYHSSLSVSHCQLENLSLAICTPTPFTLTADSVQWIDSVN.

Belongs to the P-Pant transferase superfamily. Gsp/Sfp/HetI/AcpT family.

It catalyses the reaction apo-[ACP] + CoA = holo-[ACP] + adenosine 3',5'-bisphosphate + H(+). Functionally, may be involved in an alternative pathway for phosphopantetheinyl transfer and holo-ACP synthesis in E.coli. The native apo-protein substrate is unknown. Is able to functionally replace AcpS in vivo but only when expressed at high levels. This Escherichia coli O157:H7 protein is 4'-phosphopantetheinyl transferase AcpT (acpT).